The following is a 138-amino-acid chain: Holo-[acyl-carrier-protein] synthase (138 aa).

Mg(2+) is bound by residues aspartate 8 and glutamate 56.

It belongs to the P-Pant transferase superfamily. AcpS family. It depends on Mg(2+) as a cofactor.

The protein resides in the cytoplasm. The catalysed reaction is apo-[ACP] + CoA = holo-[ACP] + adenosine 3',5'-bisphosphate + H(+). Transfers the 4'-phosphopantetheine moiety from coenzyme A to a Ser of acyl-carrier-protein. In Thermoanaerobacter pseudethanolicus (strain ATCC 33223 / 39E) (Clostridium thermohydrosulfuricum), this protein is Holo-[acyl-carrier-protein] synthase.